A 417-amino-acid polypeptide reads, in one-letter code: MTLPSVSSAPSADGVWHNCHLLPDADPAHAIRDAALVVEHGRIAWLGATADLPDAYRGAARHDAHGAWITPGLVDCHTHLVYGGQRADEFAMRLAGAGYEEIARAGGGIVSTVRATRAADEDTLFAQAAARLQPLLAEGVTAIEIKSGYGLSLEAERKQLRVARRLGEHFGISVYTTFLGAHALPPEYAGRADDYIDLVCNTMLPALAGEGLVDAVDAFCESIGFSIAQTGRVFEAAARHGVRVKLHAEQLSNLGGAALAARHRALSADHLEHLDEAGVAAMAEAGTVAVLLPGAYYFLRDTNLPPIALLRQYGVPMAISTDHNPGTSPVTSLLLMMNMACTLFRLTVPEALAGVTVHAARALGASDRHGRLEAGRVADFALWRIDSPAELAYWFGRNPVATVVRQGRVHAHEGASA.

Residues H77 and H79 each contribute to the Fe(3+) site. Zn(2+)-binding residues include H77 and H79. Residues R86, Y149, and H182 each contribute to the 4-imidazolone-5-propanoate site. Y149 is a binding site for N-formimidoyl-L-glutamate. Residue H247 participates in Fe(3+) binding. Zn(2+) is bound at residue H247. Position 250 (Q250) interacts with 4-imidazolone-5-propanoate. Fe(3+) is bound at residue D322. A Zn(2+)-binding site is contributed by D322. N324 and G326 together coordinate N-formimidoyl-L-glutamate. T327 is a 4-imidazolone-5-propanoate binding site.

Belongs to the metallo-dependent hydrolases superfamily. HutI family. Zn(2+) is required as a cofactor. Requires Fe(3+) as cofactor.

The protein resides in the cytoplasm. It carries out the reaction 4-imidazolone-5-propanoate + H2O = N-formimidoyl-L-glutamate. It functions in the pathway amino-acid degradation; L-histidine degradation into L-glutamate; N-formimidoyl-L-glutamate from L-histidine: step 3/3. Functionally, catalyzes the hydrolytic cleavage of the carbon-nitrogen bond in imidazolone-5-propanoate to yield N-formimidoyl-L-glutamate. It is the third step in the universal histidine degradation pathway. This chain is Imidazolonepropionase, found in Cupriavidus necator (strain ATCC 17699 / DSM 428 / KCTC 22496 / NCIMB 10442 / H16 / Stanier 337) (Ralstonia eutropha).